Reading from the N-terminus, the 130-residue chain is Protein ApaG (130 aa).

In terms of domain architecture, ApaG spans 3–127; sequence RAVTRNIEVQ…FSLDLPGTRR (125 aa).

The chain is Protein ApaG from Mesorhizobium japonicum (strain LMG 29417 / CECT 9101 / MAFF 303099) (Mesorhizobium loti (strain MAFF 303099)).